Consider the following 203-residue polypeptide: LexA repressor (203 aa).

The H-T-H motif DNA-binding region spans 28 to 47; sequence IREIGDEFGITAKGAYDHLK. Catalysis depends on for autocatalytic cleavage activity residues Ser127 and Lys164.

The protein belongs to the peptidase S24 family. In terms of assembly, homodimer.

The enzyme catalyses Hydrolysis of Ala-|-Gly bond in repressor LexA.. In terms of biological role, represses a number of genes involved in the response to DNA damage (SOS response), including recA and lexA. In the presence of single-stranded DNA, RecA interacts with LexA causing an autocatalytic cleavage which disrupts the DNA-binding part of LexA, leading to derepression of the SOS regulon and eventually DNA repair. In Leptospira borgpetersenii serovar Hardjo-bovis (strain JB197), this protein is LexA repressor.